The sequence spans 322 residues: Phosphate acetyltransferase (322 aa).

Belongs to the phosphate acetyltransferase and butyryltransferase family.

The protein resides in the cytoplasm. The enzyme catalyses acetyl-CoA + phosphate = acetyl phosphate + CoA. The protein operates within metabolic intermediate biosynthesis; acetyl-CoA biosynthesis; acetyl-CoA from acetate: step 2/2. In Mycoplasma capricolum subsp. capricolum (strain California kid / ATCC 27343 / NCTC 10154), this protein is Phosphate acetyltransferase (pta).